The chain runs to 88 residues: ATP synthase subunit c (88 aa).

2 helical membrane-spanning segments follow: residues 10–30 (ILAASAIGAGLAMIAGLGPGI) and 68–88 (GIYSLVIALILLFANPLIRLL).

This sequence belongs to the ATPase C chain family. In terms of assembly, F-type ATPases have 2 components, F(1) - the catalytic core - and F(0) - the membrane proton channel. F(1) has five subunits: alpha(3), beta(3), gamma(1), delta(1), epsilon(1). F(0) has three main subunits: a(1), b(2) and c(10-14). The alpha and beta chains form an alternating ring which encloses part of the gamma chain. F(1) is attached to F(0) by a central stalk formed by the gamma and epsilon chains, while a peripheral stalk is formed by the delta and b chains.

The protein resides in the cell membrane. Functionally, f(1)F(0) ATP synthase produces ATP from ADP in the presence of a proton or sodium gradient. F-type ATPases consist of two structural domains, F(1) containing the extramembraneous catalytic core and F(0) containing the membrane proton channel, linked together by a central stalk and a peripheral stalk. During catalysis, ATP synthesis in the catalytic domain of F(1) is coupled via a rotary mechanism of the central stalk subunits to proton translocation. In terms of biological role, key component of the F(0) channel; it plays a direct role in translocation across the membrane. A homomeric c-ring of between 10-14 subunits forms the central stalk rotor element with the F(1) delta and epsilon subunits. The protein is ATP synthase subunit c of Alkaliphilus oremlandii (strain OhILAs) (Clostridium oremlandii (strain OhILAs)).